The sequence spans 118 residues: Large ribosomal subunit protein bL20 (118 aa).

This sequence belongs to the bacterial ribosomal protein bL20 family.

Binds directly to 23S ribosomal RNA and is necessary for the in vitro assembly process of the 50S ribosomal subunit. It is not involved in the protein synthesizing functions of that subunit. The protein is Large ribosomal subunit protein bL20 of Yersinia enterocolitica serotype O:8 / biotype 1B (strain NCTC 13174 / 8081).